Reading from the N-terminus, the 494-residue chain is Glutamate decarboxylase 5 (494 aa).

Residue lysine 276 is modified to N6-(pyridoxal phosphate)lysine.

Belongs to the group II decarboxylase family. As to quaternary structure, homohexamer. Interacts with calmodulin. Pyridoxal 5'-phosphate is required as a cofactor. Expressed in flowers.

The catalysed reaction is L-glutamate + H(+) = 4-aminobutanoate + CO2. Catalyzes the production of GABA. The calmodulin-binding is calcium-dependent and it is proposed that this may, directly or indirectly, form a calcium regulated control of GABA biosynthesis. The sequence is that of Glutamate decarboxylase 5 (GAD5) from Arabidopsis thaliana (Mouse-ear cress).